Consider the following 128-residue polypeptide: Probable 4-amino-4-deoxy-L-arabinose-phosphoundecaprenol flippase subunit ArnF (128 aa).

At 1–2 (MG) the chain is on the cytoplasmic side. A helical transmembrane segment spans residues 3 to 23 (LMWGLFSVIIASVAQLSLGFA). Over 24–35 (ASHLPPMTHLWD) the chain is Periplasmic. Residues 36–56 (FIATLLAFGLDARILLLGLLG) form a helical membrane-spanning segment. The Cytoplasmic segment spans residues 57-77 (YLLSVFCWYKTLHKLALSKAY). A helical transmembrane segment spans residues 78-98 (ALLSMSYVLVWIASMVLPGWG). The Periplasmic segment spans residues 99 to 100 (GT). Residues 101–121 (FSLKALLGVACIMSGLMLIFL) traverse the membrane as a helical segment. Topologically, residues 122–128 (PTTKQRY) are cytoplasmic.

Belongs to the ArnF family. As to quaternary structure, heterodimer of ArnE and ArnF.

The protein resides in the cell inner membrane. It functions in the pathway bacterial outer membrane biogenesis; lipopolysaccharide biosynthesis. In terms of biological role, translocates 4-amino-4-deoxy-L-arabinose-phosphoundecaprenol (alpha-L-Ara4N-phosphoundecaprenol) from the cytoplasmic to the periplasmic side of the inner membrane. This is Probable 4-amino-4-deoxy-L-arabinose-phosphoundecaprenol flippase subunit ArnF from Shigella dysenteriae serotype 1 (strain Sd197).